A 113-amino-acid polypeptide reads, in one-letter code: Holo-[acyl-carrier-protein] synthase (113 aa).

Residues Asp-5 and Glu-50 each coordinate Mg(2+).

The protein belongs to the P-Pant transferase superfamily. AcpS family. Mg(2+) serves as cofactor.

The protein resides in the cytoplasm. It carries out the reaction apo-[ACP] + CoA = holo-[ACP] + adenosine 3',5'-bisphosphate + H(+). In terms of biological role, transfers the 4'-phosphopantetheine moiety from coenzyme A to a Ser of acyl-carrier-protein. This is Holo-[acyl-carrier-protein] synthase from Nautilia profundicola (strain ATCC BAA-1463 / DSM 18972 / AmH).